The sequence spans 446 residues: Probable inactive lipase MT1628 (446 aa).

Belongs to the AB hydrolase superfamily. Lipase family.

The protein is Probable inactive lipase MT1628 of Mycobacterium tuberculosis (strain CDC 1551 / Oshkosh).